We begin with the raw amino-acid sequence, 1150 residues long: ATP-dependent helicase/deoxyribonuclease subunit B (1150 aa).

8-15 (GRSGSGKS) contacts ATP. 4 residues coordinate [4Fe-4S] cluster: C789, C1108, C1111, and C1117.

It belongs to the helicase family. AddB/RexB type 1 subfamily. Heterodimer of AddA and AddB. Requires Mg(2+) as cofactor. [4Fe-4S] cluster is required as a cofactor.

Its function is as follows. The heterodimer acts as both an ATP-dependent DNA helicase and an ATP-dependent, dual-direction single-stranded exonuclease. Recognizes the chi site generating a DNA molecule suitable for the initiation of homologous recombination. The AddB subunit has 5' -&gt; 3' nuclease activity but not helicase activity. In Clostridium tetani (strain Massachusetts / E88), this protein is ATP-dependent helicase/deoxyribonuclease subunit B.